Reading from the N-terminus, the 485-residue chain is NADH-quinone oxidoreductase subunit N (485 aa).

Helical transmembrane passes span 8–28, 35–55, 71–91, 105–125, 127–147, 159–179, 203–223, 235–255, 271–291, 297–317, 326–346, 373–393, 408–430, and 455–475; these read LIAL…MLSI, FLNA…LWFV, GFAM…CTFA, FYLL…ANHL, ALFL…GYAF, YTIL…LVYA, LLAG…LVPF, PAPV…GVVM, VVLG…ALSQ, LLGY…IALQ, VGVY…VVSL, AAVM…LGFI, WWLV…RVAV, and IVVL…QPLI.

The protein belongs to the complex I subunit 2 family. NDH-1 is composed of 13 different subunits. Subunits NuoA, H, J, K, L, M, N constitute the membrane sector of the complex.

Its subcellular location is the cell inner membrane. The catalysed reaction is a quinone + NADH + 5 H(+)(in) = a quinol + NAD(+) + 4 H(+)(out). NDH-1 shuttles electrons from NADH, via FMN and iron-sulfur (Fe-S) centers, to quinones in the respiratory chain. The immediate electron acceptor for the enzyme in this species is believed to be ubiquinone. Couples the redox reaction to proton translocation (for every two electrons transferred, four hydrogen ions are translocated across the cytoplasmic membrane), and thus conserves the redox energy in a proton gradient. The sequence is that of NADH-quinone oxidoreductase subunit N from Salmonella gallinarum (strain 287/91 / NCTC 13346).